The sequence spans 369 residues: Anhydro-N-acetylmuramic acid kinase (369 aa).

12–19 contacts ATP; that stretch reads GTSLDGVD.

It belongs to the anhydro-N-acetylmuramic acid kinase family.

The enzyme catalyses 1,6-anhydro-N-acetyl-beta-muramate + ATP + H2O = N-acetyl-D-muramate 6-phosphate + ADP + H(+). It functions in the pathway amino-sugar metabolism; 1,6-anhydro-N-acetylmuramate degradation. The protein operates within cell wall biogenesis; peptidoglycan recycling. Catalyzes the specific phosphorylation of 1,6-anhydro-N-acetylmuramic acid (anhMurNAc) with the simultaneous cleavage of the 1,6-anhydro ring, generating MurNAc-6-P. Is required for the utilization of anhMurNAc either imported from the medium or derived from its own cell wall murein, and thus plays a role in cell wall recycling. The protein is Anhydro-N-acetylmuramic acid kinase of Escherichia coli O139:H28 (strain E24377A / ETEC).